A 60-amino-acid chain; its full sequence is MTCPICGSKTAPSYRPFCSKRCADLDLAKWLNGSYAIPASSEDEEEPLDQEAETPVAPRH.

Zn(2+)-binding residues include Cys-3, Cys-6, Cys-18, and Cys-22. Residues 38–60 form a disordered region; that stretch reads PASSEDEEEPLDQEAETPVAPRH. Acidic residues predominate over residues 41-52; sequence SEDEEEPLDQEA.

This sequence belongs to the DNA gyrase inhibitor YacG family. Interacts with GyrB. Zn(2+) is required as a cofactor.

Inhibits all the catalytic activities of DNA gyrase by preventing its interaction with DNA. Acts by binding directly to the C-terminal domain of GyrB, which probably disrupts DNA binding by the gyrase. In Ruegeria pomeroyi (strain ATCC 700808 / DSM 15171 / DSS-3) (Silicibacter pomeroyi), this protein is DNA gyrase inhibitor YacG.